Reading from the N-terminus, the 247-residue chain is 2,3-bisphosphoglycerate-dependent phosphoglycerate mutase (247 aa).

Substrate is bound by residues 8–15 (RHGESTWN), 21–22 (TG), arginine 60, 87–90 (ERHY), lysine 98, 114–115 (RR), and 183–184 (GN). The Tele-phosphohistidine intermediate role is filled by histidine 9. Catalysis depends on glutamate 87, which acts as the Proton donor/acceptor.

The protein belongs to the phosphoglycerate mutase family. BPG-dependent PGAM subfamily. Homodimer.

It carries out the reaction (2R)-2-phosphoglycerate = (2R)-3-phosphoglycerate. It participates in carbohydrate degradation; glycolysis; pyruvate from D-glyceraldehyde 3-phosphate: step 3/5. In terms of biological role, catalyzes the interconversion of 2-phosphoglycerate and 3-phosphoglycerate. This is 2,3-bisphosphoglycerate-dependent phosphoglycerate mutase from Leptothrix cholodnii (strain ATCC 51168 / LMG 8142 / SP-6) (Leptothrix discophora (strain SP-6)).